The sequence spans 167 residues: Phosphopantetheine adenylyltransferase (167 aa).

Thr-10 lines the substrate pocket. Residues 10 to 11 (TF) and His-18 each bind ATP. Ala-77 and Arg-91 together coordinate substrate. Residues 92–94 (GLR), Glu-102, and 127–133 (YSFISSS) each bind ATP.

Belongs to the bacterial CoaD family. Homohexamer. The cofactor is Mg(2+).

It localises to the cytoplasm. The catalysed reaction is (R)-4'-phosphopantetheine + ATP + H(+) = 3'-dephospho-CoA + diphosphate. It functions in the pathway cofactor biosynthesis; coenzyme A biosynthesis; CoA from (R)-pantothenate: step 4/5. Its function is as follows. Reversibly transfers an adenylyl group from ATP to 4'-phosphopantetheine, yielding dephospho-CoA (dPCoA) and pyrophosphate. This chain is Phosphopantetheine adenylyltransferase, found in Thermomicrobium roseum (strain ATCC 27502 / DSM 5159 / P-2).